A 240-amino-acid polypeptide reads, in one-letter code: Histidinol dehydrogenase homolog oryD (240 aa).

Glutamine 64 and histidine 67 together coordinate Zn(2+). The active-site Proton acceptor is glutamate 134. Zn(2+) is bound by residues aspartate 168 and histidine 228.

The protein belongs to the histidinol dehydrogenase family. The cofactor is Zn(2+).

It participates in secondary metabolite biosynthesis. Histidinol dehydrogenase homolog; part of the gene cluster that mediates the biosynthesis of oryzines, natural products with an unusual maleidride backbone. The two subunits of the fungal fatty acid synthase oryfasA and oryfasB probably form octenoic acid. This fatty acid is most likely activated by the acyl-CoA ligase oryP to give octenyl-CoA before the citrate synthase-like protein oryE catalyzes condensation with oxaloacetate to form tricarboxylic acid. The next steps of the pathways are conjectural, but a favorite possible route has been proposed, beginning with decarboxylation and concomitant dehydration by the decarboxylase oryM, followed by tautomerization, which may lead to the production of a diene intermediate. Reduction of this diene intermediate could give the known metabolite piliformic acid. On the pathway to oryzine B and oryzine A, however, hydroxylation of the diene by the alpha-ketoglutarate-dependent dioxygenase oryG and lactonisation by the lactonohydrolases oryH or oryL could give oryzine B directly. Finally, enoyl reduction by the dehydrogenase oryD would then convert oryzine B into oryzine A. This is Histidinol dehydrogenase homolog oryD from Aspergillus oryzae (strain ATCC 42149 / RIB 40) (Yellow koji mold).